A 217-amino-acid chain; its full sequence is Small ribosomal subunit protein uS3 (217 aa).

Residues 38-106 (IRKFIQKELA…QVHINIIEIK (69 aa)) form the KH type-2 domain.

Belongs to the universal ribosomal protein uS3 family. Part of the 30S ribosomal subunit. Forms a tight complex with proteins S10 and S14.

Functionally, binds the lower part of the 30S subunit head. Binds mRNA in the 70S ribosome, positioning it for translation. In Streptococcus uberis (strain ATCC BAA-854 / 0140J), this protein is Small ribosomal subunit protein uS3.